The following is a 213-amino-acid chain: Probable GH family 25 lysozyme 4 (213 aa).

The N-terminal stretch at 1–19 (MRLFLLLITFIALFGAINA) is a signal peptide. One can recognise a Ch-type lysozyme domain in the interval 21–213 (SGVDISQGSS…VGYDFNWYPN (193 aa)). Catalysis depends on residues D24, D112, and E114.

This sequence belongs to the glycosyl hydrolase 25 family.

It localises to the secreted. The enzyme catalyses Hydrolysis of (1-&gt;4)-beta-linkages between N-acetylmuramic acid and N-acetyl-D-glucosamine residues in a peptidoglycan and between N-acetyl-D-glucosamine residues in chitodextrins.. This chain is Probable GH family 25 lysozyme 4, found in Dictyostelium discoideum (Social amoeba).